Reading from the N-terminus, the 142-residue chain is MTNVFVDSRRDLRERAFQALFSLEFGGDNLTAARFAYTYDKNEEEEAELPLFLLTLIQGVSDCRREIDKNISIHLKSGWTLSRLTLIDKSLLRLGLYEIKYHKETPERVALNEIIEIAKKYSDEKSSKFINGVLSQFVLERK.

Belongs to the NusB family.

In terms of biological role, involved in transcription antitermination. Required for transcription of ribosomal RNA (rRNA) genes. Binds specifically to the boxA antiterminator sequence of the ribosomal RNA (rrn) operons. In Streptococcus mutans serotype c (strain ATCC 700610 / UA159), this protein is Transcription antitermination protein NusB.